The sequence spans 460 residues: Lipase member H-B (460 aa).

Positions 1–26 (MLLSFYFNGLLLVGCLLSWGRSDTEG) are cleaved as a signal peptide. 2 N-linked (GlcNAc...) asparagine glycosylation sites follow: Asn67 and Asn75. Ser163 acts as the Nucleophile in catalysis. N-linked (GlcNAc...) asparagine glycosylation is present at Asn177. Asp187 serves as the catalytic Charge relay system. A disulfide bridge links Cys242 with Cys255. The active-site Charge relay system is His257. 2 disulfide bridges follow: Cys279-Cys290 and Cys293-Cys301. Asn289 carries an N-linked (GlcNAc...) asparagine glycan. N-linked (GlcNAc...) asparagine glycosylation is present at Asn366. Cys436 and Cys455 are oxidised to a cystine.

It belongs to the AB hydrolase superfamily. Lipase family.

The protein resides in the secreted. It is found in the cell membrane. It catalyses the reaction 1-hexadecanoyl-2-(9Z-octadecenoyl)-sn-glycero-3-phosphate + H2O = 2-(9Z-octadecenoyl)-sn-glycero-3-phosphate + hexadecanoate + H(+). Functionally, hydrolyzes specifically phosphatidic acid (PA) to produce 2-acyl lysophosphatidic acid (LPA; a potent bioactive lipid mediator) and fatty acid. Does not hydrolyze other phospholipids, like phosphatidylserine (PS), phosphatidylcholine (PC) and phosphatidylethanolamine (PE) or triacylglycerol (TG). The sequence is that of Lipase member H-B (liph-b) from Xenopus laevis (African clawed frog).